Consider the following 179-residue polypeptide: Large ribosomal subunit protein uL5 (179 aa).

This sequence belongs to the universal ribosomal protein uL5 family. Part of the 50S ribosomal subunit; part of the 5S rRNA/L5/L18/L25 subcomplex. Contacts the 5S rRNA and the P site tRNA. Forms a bridge to the 30S subunit in the 70S ribosome.

Its function is as follows. This is one of the proteins that bind and probably mediate the attachment of the 5S RNA into the large ribosomal subunit, where it forms part of the central protuberance. In the 70S ribosome it contacts protein S13 of the 30S subunit (bridge B1b), connecting the 2 subunits; this bridge is implicated in subunit movement. Contacts the P site tRNA; the 5S rRNA and some of its associated proteins might help stabilize positioning of ribosome-bound tRNAs. In Bacillus cereus (strain G9842), this protein is Large ribosomal subunit protein uL5.